The following is a 379-amino-acid chain: Cytochrome b (379 aa).

4 helical membrane passes run 33–53 (FGSL…FLAM), 77–98 (WLIR…FIHV), 113–133 (WNIG…GYVL), and 178–198 (FFAF…VHLL). Heme b is bound by residues H83 and H97. 2 residues coordinate heme b: H182 and H196. H201 contributes to the a ubiquinone binding site. 4 helical membrane-spanning segments follow: residues 226–246 (TKDL…ALFF), 288–308 (LGGV…PLLN), 320–340 (VTQV…WIGG), and 347–367 (FTMI…ILMP).

The protein belongs to the cytochrome b family. The cytochrome bc1 complex contains 11 subunits: 3 respiratory subunits (MT-CYB, CYC1 and UQCRFS1), 2 core proteins (UQCRC1 and UQCRC2) and 6 low-molecular weight proteins (UQCRH/QCR6, UQCRB/QCR7, UQCRQ/QCR8, UQCR10/QCR9, UQCR11/QCR10 and a cleavage product of UQCRFS1). This cytochrome bc1 complex then forms a dimer. Heme b is required as a cofactor.

The protein resides in the mitochondrion inner membrane. In terms of biological role, component of the ubiquinol-cytochrome c reductase complex (complex III or cytochrome b-c1 complex) that is part of the mitochondrial respiratory chain. The b-c1 complex mediates electron transfer from ubiquinol to cytochrome c. Contributes to the generation of a proton gradient across the mitochondrial membrane that is then used for ATP synthesis. The protein is Cytochrome b (MT-CYB) of Akodon kofordi (Koford's grass mouse).